We begin with the raw amino-acid sequence, 847 residues long: DNA mismatch repair protein MutS (847 aa).

ATP is bound at residue 603 to 610; that stretch reads GPNMSGKS.

It belongs to the DNA mismatch repair MutS family.

In terms of biological role, this protein is involved in the repair of mismatches in DNA. It is possible that it carries out the mismatch recognition step. This protein has a weak ATPase activity. The protein is DNA mismatch repair protein MutS of Streptococcus suis (strain 98HAH33).